A 148-amino-acid chain; its full sequence is Large ribosomal subunit protein bL9 (148 aa).

The protein belongs to the bacterial ribosomal protein bL9 family.

Functionally, binds to the 23S rRNA. This is Large ribosomal subunit protein bL9 from Prosthecochloris aestuarii (strain DSM 271 / SK 413).